A 402-amino-acid chain; its full sequence is MQVVSRRLVQRPLVGGASIYSSSSLRSLYGVSNHLNGTDNCRYSSSLATKGVGHLARKGTGGRSSVSGIVATVFGATGFLGRYLVQQLAKMGSQVLVPFRGSEDSPRHLKLMGDLGQVVPMKFDPRDEDSIKAVMAKANVVINLIGREYETRNFSFEDANHHIAEKLALVAKEHGGIMRYIQVSCLGASVSSPSRMLRAKAAAEEAVLNALPEATIMRPATMIGTEDRILNPWSMFVKKYGFLPLIGGGTTKFQPVYVVDVAAAIVAALKDDGSSMGKTYELGGPDVFTTHELAEIMYDMIREWPRYVKLPFPIAKAMAAPRDFMVNKVPFPLPSPQIFNLDQINALTTDTLVSDNALKFQDLDLVPHKLKGYPVEFLIQYRKGGPNFGSTVSEKIPTDFYP.

A mitochondrion-targeting transit peptide spans 1-43 (MQVVSRRLVQRPLVGGASIYSSSSLRSLYGVSNHLNGTDNCRY).

It belongs to the complex I NDUFA9 subunit family. Complex I is composed of at least 49 different subunits. This a component of the hydrophobic protein fraction. FAD serves as cofactor.

It is found in the mitochondrion matrix. Functionally, accessory subunit of the mitochondrial membrane respiratory chain NADH dehydrogenase (Complex I), that is believed not to be involved in catalysis. Complex I functions in the transfer of electrons from NADH to the respiratory chain. The immediate electron acceptor for the enzyme is believed to be ubiquinone. The protein is NADH dehydrogenase [ubiquinone] 1 alpha subcomplex subunit 9, mitochondrial of Arabidopsis thaliana (Mouse-ear cress).